The following is a 427-amino-acid chain: 5-hydroxybenzimidazole synthase BzaA (427 aa).

The protein belongs to the ThiC family. 5-hydroxybenzimidazole synthase subfamily. The cofactor is [4Fe-4S] cluster.

The catalysed reaction is 5-amino-1-(5-phospho-beta-D-ribosyl)imidazole + AH2 + S-adenosyl-L-methionine = 5-hydroxybenzimidazole + 5'-deoxyadenosine + formate + L-methionine + A + NH4(+) + phosphate + 2 H(+). Its pathway is cofactor biosynthesis; adenosylcobalamin biosynthesis. Its function is as follows. Together with BzaB, catalyzes the conversion of aminoimidazole ribotide (AIR) to 5-hydroxybenzimidazole (5-HBI) in a radical S-adenosyl-L-methionine (SAM)-dependent reaction. Is thus involved in the anaerobic biosynthesis of dimethylbenzimidazole (DMB), the lower axial ligand of vitamin B12 (cobalamin). Requires BzaB for catalytic activity, as BzaA alone displays no activity. This is 5-hydroxybenzimidazole synthase BzaA from Eubacterium limosum.